Here is a 96-residue protein sequence, read N- to C-terminus: Aspartyl/glutamyl-tRNA(Asn/Gln) amidotransferase subunit C (96 aa).

It belongs to the GatC family. Heterotrimer of A, B and C subunits.

It catalyses the reaction L-glutamyl-tRNA(Gln) + L-glutamine + ATP + H2O = L-glutaminyl-tRNA(Gln) + L-glutamate + ADP + phosphate + H(+). It carries out the reaction L-aspartyl-tRNA(Asn) + L-glutamine + ATP + H2O = L-asparaginyl-tRNA(Asn) + L-glutamate + ADP + phosphate + 2 H(+). Allows the formation of correctly charged Asn-tRNA(Asn) or Gln-tRNA(Gln) through the transamidation of misacylated Asp-tRNA(Asn) or Glu-tRNA(Gln) in organisms which lack either or both of asparaginyl-tRNA or glutaminyl-tRNA synthetases. The reaction takes place in the presence of glutamine and ATP through an activated phospho-Asp-tRNA(Asn) or phospho-Glu-tRNA(Gln). The polypeptide is Aspartyl/glutamyl-tRNA(Asn/Gln) amidotransferase subunit C (Exiguobacterium sp. (strain ATCC BAA-1283 / AT1b)).